The sequence spans 51 residues: Large ribosomal subunit protein bL33 (51 aa).

Belongs to the bacterial ribosomal protein bL33 family. As to quaternary structure, part of the 50S ribosomal subunit. Cross-links to the P and E site tRNAs.

The polypeptide is Large ribosomal subunit protein bL33 (Pseudomonas aeruginosa (strain ATCC 15692 / DSM 22644 / CIP 104116 / JCM 14847 / LMG 12228 / 1C / PRS 101 / PAO1)).